The primary structure comprises 106 residues: Putative double-stranded DNA mimic protein PM0536 (106 aa).

It belongs to the putative dsDNA mimic protein family.

May act as a double-stranded DNA (dsDNA) mimic. Probably regulates the activity of a dsDNA-binding protein. In Pasteurella multocida (strain Pm70), this protein is Putative double-stranded DNA mimic protein PM0536.